The sequence spans 369 residues: tRNA/tmRNA (uracil-C(5))-methyltransferase (369 aa).

S-adenosyl-L-methionine contacts are provided by Gln-193, Tyr-221, Asn-226, Glu-242, and Asp-302. The active-site Nucleophile is Cys-327. Glu-361 functions as the Proton acceptor in the catalytic mechanism.

Belongs to the class I-like SAM-binding methyltransferase superfamily. RNA M5U methyltransferase family. TrmA subfamily.

The enzyme catalyses uridine(54) in tRNA + S-adenosyl-L-methionine = 5-methyluridine(54) in tRNA + S-adenosyl-L-homocysteine + H(+). It carries out the reaction uridine(341) in tmRNA + S-adenosyl-L-methionine = 5-methyluridine(341) in tmRNA + S-adenosyl-L-homocysteine + H(+). Its function is as follows. Dual-specificity methyltransferase that catalyzes the formation of 5-methyluridine at position 54 (m5U54) in all tRNAs, and that of position 341 (m5U341) in tmRNA (transfer-mRNA). The sequence is that of tRNA/tmRNA (uracil-C(5))-methyltransferase from Actinobacillus succinogenes (strain ATCC 55618 / DSM 22257 / CCUG 43843 / 130Z).